Consider the following 371-residue polypeptide: tRNA-specific 2-thiouridylase MnmA (371 aa).

ATP contacts are provided by residues 24–31 (AMSGGVDS) and leucine 50. The Nucleophile role is filled by cysteine 120. Cysteine 120 and cysteine 216 are oxidised to a cystine. Glycine 144 serves as a coordination point for ATP. An interaction with tRNA region spans residues 166-168 (KDQ). Residue cysteine 216 is the Cysteine persulfide intermediate of the active site.

This sequence belongs to the MnmA/TRMU family.

Its subcellular location is the cytoplasm. It carries out the reaction S-sulfanyl-L-cysteinyl-[protein] + uridine(34) in tRNA + AH2 + ATP = 2-thiouridine(34) in tRNA + L-cysteinyl-[protein] + A + AMP + diphosphate + H(+). Functionally, catalyzes the 2-thiolation of uridine at the wobble position (U34) of tRNA, leading to the formation of s(2)U34. The chain is tRNA-specific 2-thiouridylase MnmA from Wolbachia sp. subsp. Brugia malayi (strain TRS).